The following is a 154-amino-acid chain: Ribonuclease H (154 aa).

The region spanning 5–146 (EQNIVYLYCD…ADELANRGID (142 aa)) is the RNase H type-1 domain. Mg(2+) contacts are provided by D14, E52, D74, and D138.

This sequence belongs to the RNase H family. As to quaternary structure, monomer. Mg(2+) is required as a cofactor.

It localises to the cytoplasm. It carries out the reaction Endonucleolytic cleavage to 5'-phosphomonoester.. Functionally, endonuclease that specifically degrades the RNA of RNA-DNA hybrids. The sequence is that of Ribonuclease H from Coxiella burnetii (strain CbuG_Q212) (Coxiella burnetii (strain Q212)).